A 261-amino-acid polypeptide reads, in one-letter code: Imidazole glycerol phosphate synthase subunit HisF (261 aa).

Catalysis depends on residues D12 and D131.

This sequence belongs to the HisA/HisF family. In terms of assembly, heterodimer of HisH and HisF.

It is found in the cytoplasm. It carries out the reaction 5-[(5-phospho-1-deoxy-D-ribulos-1-ylimino)methylamino]-1-(5-phospho-beta-D-ribosyl)imidazole-4-carboxamide + L-glutamine = D-erythro-1-(imidazol-4-yl)glycerol 3-phosphate + 5-amino-1-(5-phospho-beta-D-ribosyl)imidazole-4-carboxamide + L-glutamate + H(+). It participates in amino-acid biosynthesis; L-histidine biosynthesis; L-histidine from 5-phospho-alpha-D-ribose 1-diphosphate: step 5/9. In terms of biological role, IGPS catalyzes the conversion of PRFAR and glutamine to IGP, AICAR and glutamate. The HisF subunit catalyzes the cyclization activity that produces IGP and AICAR from PRFAR using the ammonia provided by the HisH subunit. This Brucella melitensis biotype 2 (strain ATCC 23457) protein is Imidazole glycerol phosphate synthase subunit HisF.